The following is a 317-amino-acid chain: Transaldolase (317 aa).

Lys132 functions as the Schiff-base intermediate with substrate in the catalytic mechanism.

The protein belongs to the transaldolase family. Type 1 subfamily. In terms of assembly, homodimer.

It is found in the cytoplasm. It carries out the reaction D-sedoheptulose 7-phosphate + D-glyceraldehyde 3-phosphate = D-erythrose 4-phosphate + beta-D-fructose 6-phosphate. Its pathway is carbohydrate degradation; pentose phosphate pathway; D-glyceraldehyde 3-phosphate and beta-D-fructose 6-phosphate from D-ribose 5-phosphate and D-xylulose 5-phosphate (non-oxidative stage): step 2/3. Transaldolase is important for the balance of metabolites in the pentose-phosphate pathway. This chain is Transaldolase, found in Yersinia enterocolitica serotype O:8 / biotype 1B (strain NCTC 13174 / 8081).